Reading from the N-terminus, the 461-residue chain is MMQNLPFEPEFEQAYKELASTLENSTLFQKKPEYRKALQVVSVPERVIQFRVVWEDDKGQVQINRGYRVQFNSALGPYKGGLRFHPTVNLSILKFLGFEQIFKNALTGLNMGGGKGGSDFDPKGKTDNEIRRFCVSFMTELCKHIGADTDVPAGDIGVTGREVGFMFGQYKKIRNQWEGVLTGKGGSWGGSLIRPEATGYGVVYYVEHMIQHASGGKESFAGKRVAISGSGNVAQYAALKVIELGGSVISLSDSQGALVLNGEEGSFTAEEINTIAEIKVQRKQIAELATQDAFSSKFKYIPGARPWTNIAGRIDVALPSATQNEVSGDEAKALIAAGCKFIAEGSNMGSTQEAIDVFEAHRDANPGAAAIWYAPGKAANAGGVAVSGLEMAQNSARVNWSREEVDSRLKKIMEDCFNNGLSTAKEYVTPAEGVLPSLVAGSNIAGFTKVAEAMKEHGDWW.

K115 is a catalytic residue.

This sequence belongs to the Glu/Leu/Phe/Val dehydrogenases family. Homohexamer.

The enzyme catalyses L-glutamate + NADP(+) + H2O = 2-oxoglutarate + NH4(+) + NADPH + H(+). This Penicillium chrysogenum (Penicillium notatum) protein is NADP-specific glutamate dehydrogenase (GDH).